The sequence spans 42 residues: Fungal defensin eurocin (42 aa).

Beta-D-GlcNAc-(1-&gt;4)-Mur2Ac(oyl-L-Ala-gamma-D-Glu-L-Lys-D-Ala-D-Ala)-di-trans,octa-cis-undecaprenyl diphosphate-binding residues include Phe-2, Gly-3, Cys-4, and His-14. Disulfide bonds link Cys-4–Cys-27, Cys-11–Cys-38, and Cys-15–Cys-40. Residues 31-35 are interaction site with membranes lipids; it reads WYLGH. Cys-38 is a binding site for beta-D-GlcNAc-(1-&gt;4)-Mur2Ac(oyl-L-Ala-gamma-D-Glu-L-Lys-D-Ala-D-Ala)-di-trans,octa-cis-undecaprenyl diphosphate.

It belongs to the invertebrate defensin family.

Its subcellular location is the secreted. The protein localises to the target cell membrane. Its function is as follows. Antimicrobial peptide that acts against Gram-positive bacteria but not against Gram-negative bacteria. It selectively inhibits peptidoglycan biosynthesis through complex formation with the cell wall precursor lipid II (1:1 molar ratio) thus inhibiting cell wall synthesis. It does not disrupt cell membranes. In vivo, is effective against an intraperitoneal infection with S.pneumoniae. In vitro, it shows very low hemolytic and cytolytic activities. The chain is Fungal defensin eurocin from Aspergillus amstelodami.